Reading from the N-terminus, the 359-residue chain is CCAAT/enhancer-binding protein alpha (359 aa).

Residues 1 to 55 (MESADFYEVEPRPPMSSHLQSPPHAPSNAAFGFPRGAGPAPPPAPPAAPEPLGGI) are disordered. The segment at 1 to 70 (MESADFYEVE…SIDISAYIDP (70 aa)) is required to repress E2F1:TFDP1-mediated transcription, to inhibit cell cycle and to induce adipocyte differentiation. The segment covering 29 to 38 (AAFGFPRGAG) has biased composition (low complexity). Residues 39–49 (PAPPPAPPAAP) show a composition bias toward pro residues. The interval 54-72 (GICEHETSIDISAYIDPAA) is required for interaction with TRIB1. The interval 126–200 (PPGYGCAAAG…HASPAHLAAP (75 aa)) is required to induce adipocyte differentiation. K159 is modified (N6-acetyllysine; alternate). Residue K159 forms a Glycyl lysine isopeptide (Lys-Gly) (interchain with G-Cter in SUMO); alternate linkage. K159 participates in a covalent cross-link: Glycyl lysine isopeptide (Lys-Gly) (interchain with G-Cter in SUMO2); alternate. Disordered stretches follow at residues 176 to 195 (LFPY…ASPA) and 213 to 293 (TMHL…RERN). Residues 179–191 (YQPPPPPPPPHPH) are compositionally biased toward pro residues. Residues 180–194 (QPPPPPPPPHPHASP) are required to functionally cooperate with SREBF1 in promoter activation. Phosphoserine is present on S193. Positions 220–232 (HPTPPPTPVPSPH) are enriched in pro residues. T222 and T226 each carry phosphothreonine; by GSK3. Phosphoserine; by GSK3 is present on S230. A compositionally biased stretch (low complexity) spans 233-255 (AAPALGAAGLPGPGSALKGLAGA). The segment at 240–359 (AGLPGPGSAL…SLVKAMGNCA (120 aa)) is interaction with FOXO1. Positions 261 to 272 (TGGGGGGSGAGA) are enriched in gly residues. Residues 277-293 (KSVDKNSNEYRVRRERN) show a composition bias toward basic and acidic residues. The region spanning 283-346 (SNEYRVRRER…DTLRGIFRQL (64 aa)) is the bZIP domain. The DNA-binding element occupies 286-301 (YRVRRERNNIAVRKSR). Residues 287–314 (RVRRERNNIAVRKSRDKAKQRNVETQQK) are basic motif. Residues 318-346 (LTSDNDRLRKRVEQLSRELDTLRGIFRQL) form a leucine-zipper region.

This sequence belongs to the bZIP family. C/EBP subfamily. In terms of assembly, binds DNA as a homodimer and as a heterodimer. Can form stable heterodimers with CEBPB, CEBPD, CEBPE and CEBPG. Interacts with PRDM16. Interacts with UBN1. Interacts with ZNF638; this interaction increases transcriptional activation. Interacts with the complex TFDP2:E2F1; the interaction prevents CEBPA binding to target gene promoters and represses its transcriptional activity. Interacts with RB1. Interacts (when phosphorylated at Ser-193) with CDK2, CDK4, E2F4 and SMARCA2. Interacts with SREBPF1. Interacts with FOXO1 (via the Fork-head domain); the interaction increases when FOXO1 is deacetylated. Interacts with SIX1. Interacts (via recognition sequence) with TRIB1. Interacts (via bZIP domain) with OVOL2 (via zinc-finger domains); the interaction inhibits the transcription factor activity of CEBPA and is required to repress adipogenesis. Interacts with TAF1A and UBTF. As to quaternary structure, interacts with TAF1A and UBTF. Interacts with NPM1. Post-translationally, sumoylated, sumoylation blocks the inhibitory effect on cell proliferation by disrupting the interaction with SMARCA2. In terms of processing, phosphorylation at Ser-193 is required for interaction with CDK2, CDK4 and SWI/SNF complex leading to cell cycle inhibition. Dephosphorylated at Ser-193 by protein phosphatase 2A (PP2A) through PI3K/AKT signaling pathway regulation. Phosphorylation at Thr-222 and Thr-226 by GSK3 is constitutive in adipose tissue and lung. In liver, both Thr-222 and Thr-226 are phosphorylated only during feeding but not during fasting. Phosphorylation of the GSK3 consensus sites selectively decreases transactivation activity on IRE-controlled promoters. Ubiquitinated by COP1 upon interaction with TRIB1. As to expression, isoform 2 and isoform 3 are expressed in adipose tissue and liver (at protein level).

The protein resides in the nucleus. Its subcellular location is the nucleolus. Functionally, transcription factor that coordinates proliferation arrest and the differentiation of myeloid progenitors, adipocytes, hepatocytes, and cells of the lung and the placenta. Binds directly to the consensus DNA sequence 5'-T[TG]NNGNAA[TG]-3' acting as an activator on distinct target genes. During early embryogenesis, plays essential and redundant functions with CEBPB. Essential for the transition from common myeloid progenitors (CMP) to granulocyte/monocyte progenitors (GMP). Critical for the proper development of the liver and the lung. Necessary for terminal adipocyte differentiation, is required for postnatal maintenance of systemic energy homeostasis and lipid storage. To regulate these different processes at the proper moment and tissue, interplays with other transcription factors and modulators. Down-regulates the expression of genes that maintain cells in an undifferentiated and proliferative state through E2F1 repression, which is critical for its ability to induce adipocyte and granulocyte terminal differentiation. Reciprocally E2F1 blocks adipocyte differentiation by binding to specific promoters and repressing CEBPA binding to its target gene promoters. Proliferation arrest also depends on a functional binding to SWI/SNF complex. In liver, regulates gluconeogenesis and lipogenesis through different mechanisms. To regulate gluconeogenesis, functionally cooperates with FOXO1 binding to IRE-controlled promoters and regulating the expression of target genes such as PCK1 or G6PC1. To modulate lipogenesis, interacts and transcriptionally synergizes with SREBF1 in promoter activation of specific lipogenic target genes such as ACAS2. In adipose tissue, seems to act as FOXO1 coactivator accessing to ADIPOQ promoter through FOXO1 binding sites. In terms of biological role, can act as dominant-negative. Binds DNA and have transctivation activity, even if much less efficiently than isoform 2. Does not inhibit cell proliferation. Directly and specifically enhances ribosomal DNA transcription interacting with RNA polymerase I-specific cofactors and inducing histone acetylation. The chain is CCAAT/enhancer-binding protein alpha from Mus musculus (Mouse).